Here is a 94-residue protein sequence, read N- to C-terminus: Putative RNA-binding protein RbpD (94 aa).

The RRM domain maps to 2-79 (TIYVGNLSYR…RQLRVNKAKP (78 aa)). The tract at residues 73–94 (RVNKAKPREDDRRGSWGKKQDY) is disordered. A compositionally biased stretch (basic and acidic residues) spans 78-94 (KPREDDRRGSWGKKQDY).

The sequence is that of Putative RNA-binding protein RbpD (rbpD) from Nostoc sp. (strain PCC 7120 / SAG 25.82 / UTEX 2576).